We begin with the raw amino-acid sequence, 133 residues long: Fluoride-specific ion channel FluC (133 aa).

The next 4 membrane-spanning stretches (helical) occupy residues L12–I32, W41–L61, I76–F96, and M104–A124. Positions 81 and 84 each coordinate Na(+).

Belongs to the fluoride channel Fluc/FEX (TC 1.A.43) family.

The protein localises to the cell inner membrane. The enzyme catalyses fluoride(in) = fluoride(out). Na(+) is not transported, but it plays an essential structural role and its presence is essential for fluoride channel function. Fluoride-specific ion channel. Important for reducing fluoride concentration in the cell, thus reducing its toxicity. The protein is Fluoride-specific ion channel FluC of Xanthomonas euvesicatoria pv. vesicatoria (strain 85-10) (Xanthomonas campestris pv. vesicatoria).